Consider the following 419-residue polypeptide: 4-hydroxyphenylpyruvate dioxygenase (419 aa).

VOC domains lie at 37 to 185 (GYDH…LLSR) and 216 to 376 (RIDH…LFTR). 3 residues coordinate Fe cation: histidine 219, histidine 302, and glutamate 387.

This sequence belongs to the 4HPPD family. Fe cation is required as a cofactor.

The enzyme catalyses 3-(4-hydroxyphenyl)pyruvate + O2 = homogentisate + CO2. Its pathway is amino-acid degradation; L-phenylalanine degradation; acetoacetate and fumarate from L-phenylalanine: step 3/6. The polypeptide is 4-hydroxyphenylpyruvate dioxygenase (HPD4) (Pyricularia oryzae (strain 70-15 / ATCC MYA-4617 / FGSC 8958) (Rice blast fungus)).